A 410-amino-acid polypeptide reads, in one-letter code: Bifunctional enzyme IspD/IspF (410 aa).

The tract at residues 1–257 is 2-C-methyl-D-erythritol 4-phosphate cytidylyltransferase; sequence MSHDPVVPSA…AGAGSASSRL (257 aa). A 2-C-methyl-D-erythritol 2,4-cyclodiphosphate synthase region spans residues 258-410; it reads RSGIGTDVHA…AVATALVERL (153 aa). A divalent metal cation contacts are provided by D264 and H266. Residues 264–266 and 290–291 each bind 4-CDP-2-C-methyl-D-erythritol 2-phosphate; these read DVH and HS. H298 is a binding site for a divalent metal cation. 4-CDP-2-C-methyl-D-erythritol 2-phosphate is bound by residues 312-314, 385-388, F392, and R395; these read DIG and TTTD.

This sequence in the N-terminal section; belongs to the IspD/TarI cytidylyltransferase family. IspD subfamily. In the C-terminal section; belongs to the IspF family. It depends on a divalent metal cation as a cofactor.

It catalyses the reaction 2-C-methyl-D-erythritol 4-phosphate + CTP + H(+) = 4-CDP-2-C-methyl-D-erythritol + diphosphate. It carries out the reaction 4-CDP-2-C-methyl-D-erythritol 2-phosphate = 2-C-methyl-D-erythritol 2,4-cyclic diphosphate + CMP. Its pathway is isoprenoid biosynthesis; isopentenyl diphosphate biosynthesis via DXP pathway; isopentenyl diphosphate from 1-deoxy-D-xylulose 5-phosphate: step 2/6. It functions in the pathway isoprenoid biosynthesis; isopentenyl diphosphate biosynthesis via DXP pathway; isopentenyl diphosphate from 1-deoxy-D-xylulose 5-phosphate: step 4/6. Its function is as follows. Bifunctional enzyme that catalyzes the formation of 4-diphosphocytidyl-2-C-methyl-D-erythritol from CTP and 2-C-methyl-D-erythritol 4-phosphate (MEP) (IspD), and catalyzes the conversion of 4-diphosphocytidyl-2-C-methyl-D-erythritol 2-phosphate (CDP-ME2P) to 2-C-methyl-D-erythritol 2,4-cyclodiphosphate (ME-CPP) with a corresponding release of cytidine 5-monophosphate (CMP) (IspF). This chain is Bifunctional enzyme IspD/IspF, found in Clavibacter michiganensis subsp. michiganensis (strain NCPPB 382).